The following is a 338-amino-acid chain: GDSL esterase/lipase At5g63170 (338 aa).

Positions 1–23 (MNSLVIQTTIVLVSVISVSIVHA) are cleaved as a signal peptide. Ser35 serves as the catalytic Nucleophile. Residues Asp313 and His316 contribute to the active site.

Belongs to the 'GDSL' lipolytic enzyme family.

It is found in the secreted. The chain is GDSL esterase/lipase At5g63170 from Arabidopsis thaliana (Mouse-ear cress).